We begin with the raw amino-acid sequence, 1863 residues long: C-myc promoter-binding protein (1863 aa).

The MABP domain maps to 42-200 (KEPITDVSVI…AVYLCYKKSV (159 aa)). Positions 192 to 364 (VYLCYKKSVA…KVPFPSPQRP (173 aa)) constitute a uDENN domain. A cDENN domain is found at 385–521 (PLPLSGGKFS…PCKNLMNTLN (137 aa)). Residues 523-641 (LHQQLAKLQQ…CSFVSDKDAS (119 aa)) enclose the dDENN domain. Ser-731 carries the phosphoserine modification. PPR repeat units follow at residues 772–808 (WFIC…MDPP) and 809–843 (DEVC…GIDP). Residues 905–952 (DLGYNSLSKDEVRRGDTSTEDIQEEKDKKGSDCSSLSESESTKGSADC) form a disordered region. Over residues 912 to 921 (SKDEVRRGDT) the composition is skewed to basic and acidic residues. A Bipartite nuclear localization signal motif is present at residues 917–933 (RRGDTSTEDIQEEKDKK). A compositionally biased stretch (low complexity) spans 936-949 (DCSSLSESESTKGS). A phosphoserine mark is found at Ser-1015, Ser-1035, Ser-1099, Ser-1151, and Ser-1152. Positions 1075-1111 (TRPNTLDIGKPPLRSKRDSLEKESSDDDTPFDGSNYL) are disordered. The tract at residues 1177–1202 (TEQQQKEEEEEDEDDSKSISTPSARR) is disordered. Phosphoserine is present on residues Ser-1225, Ser-1240, and Ser-1251. 2 disordered regions span residues 1237–1306 (NKKS…SPSF) and 1348–1375 (SKDQ…TDED). Positions 1269–1279 (TKSEEKPRDRL) are enriched in basic and acidic residues. Phosphoserine is present on Ser-1281. Polar residues-rich tracts occupy residues 1297–1306 (DTLTHSSPSF) and 1348–1371 (SKDQ…STSL). A phosphoserine mark is found at Ser-1508, Ser-1587, Ser-1589, and Ser-1591.

In terms of tissue distribution, expressed ubiquitously. Highest expression in bone marrow, medium in peripheral blood lymphocytes and lowest in spleen. In brain, breast, and prostate, higher expression was seen in normal cells than in tumor cells. Expression is regulated in a growth- and cell cycle-dependent manner.

Its subcellular location is the nucleus. Probable guanine nucleotide exchange factor (GEF) which may activate RAB10. Promotes the exchange of GDP to GTP, converting inactive GDP-bound Rab proteins into their active GTP-bound form. According to PubMed:8056341, it may bind to ISRE-like element (interferon-stimulated response element) of MYC P2 promoter. The chain is C-myc promoter-binding protein (DENND4A) from Homo sapiens (Human).